A 303-amino-acid chain; its full sequence is Hemolysin C (303 aa).

CBS domains follow at residues 81-143 (MVPR…NSPL) and 146-203 (LIRK…IDDE).

It belongs to the UPF0053 family. Hemolysin C subfamily.

The sequence is that of Hemolysin C (tlyC) from Rickettsia prowazekii (strain Madrid E).